The chain runs to 372 residues: tRNA-specific 2-thiouridylase MnmA (372 aa).

ATP is bound by residues 16-23 (GMSGGVDS) and methionine 42. The interaction with target base in tRNA stretch occupies residues 102–104 (NPD). Cysteine 107 serves as the catalytic Nucleophile. A disulfide bond links cysteine 107 and cysteine 205. ATP is bound at residue glycine 132. The tract at residues 155 to 157 (KDQ) is interaction with tRNA. The active-site Cysteine persulfide intermediate is the cysteine 205. Residues 317-318 (RY) are interaction with tRNA.

It belongs to the MnmA/TRMU family.

The protein resides in the cytoplasm. It carries out the reaction S-sulfanyl-L-cysteinyl-[protein] + uridine(34) in tRNA + AH2 + ATP = 2-thiouridine(34) in tRNA + L-cysteinyl-[protein] + A + AMP + diphosphate + H(+). Functionally, catalyzes the 2-thiolation of uridine at the wobble position (U34) of tRNA, leading to the formation of s(2)U34. The sequence is that of tRNA-specific 2-thiouridylase MnmA from Shewanella denitrificans (strain OS217 / ATCC BAA-1090 / DSM 15013).